Reading from the N-terminus, the 793-residue chain is Neurobeachin (793 aa).

2 disordered regions span residues 68–92 (ENIKKGKKGNVSTISGLSSQTTGAK) and 685–793 (RETA…EILK). Polar residues-rich tracts occupy residues 77-90 (NVSTISGLSSQTTG), 689-710 (RSGSQAGRNIRQEINSPTSTET), 750-762 (NILNGTDLETSTG), and 782-793 (ESLTESPSEILK).

It belongs to the WD repeat neurobeachin family. Interacts with RII subunit of PKA. In terms of tissue distribution, forebrain and cerebellum.

Its subcellular location is the cytoplasm. The protein resides in the membrane. Functionally, binds to type II regulatory subunits of protein kinase A and anchors/targets them to the membrane. May anchor the kinase to cytoskeletal and/or organelle-associated proteins. This is Neurobeachin (NBEA) from Gallus gallus (Chicken).